We begin with the raw amino-acid sequence, 220 residues long: Phosphoribosylformylglycinamidine synthase subunit PurQ (220 aa).

The region spanning 2–220 (RVGVVVFPGS…LRSVLAGAKV (219 aa)) is the Glutamine amidotransferase type-1 domain. C85 acts as the Nucleophile in catalysis. Active-site residues include H193 and E195.

Part of the FGAM synthase complex composed of 1 PurL, 1 PurQ and 2 PurS subunits.

The protein resides in the cytoplasm. The catalysed reaction is N(2)-formyl-N(1)-(5-phospho-beta-D-ribosyl)glycinamide + L-glutamine + ATP + H2O = 2-formamido-N(1)-(5-O-phospho-beta-D-ribosyl)acetamidine + L-glutamate + ADP + phosphate + H(+). It catalyses the reaction L-glutamine + H2O = L-glutamate + NH4(+). Its pathway is purine metabolism; IMP biosynthesis via de novo pathway; 5-amino-1-(5-phospho-D-ribosyl)imidazole from N(2)-formyl-N(1)-(5-phospho-D-ribosyl)glycinamide: step 1/2. Its function is as follows. Part of the phosphoribosylformylglycinamidine synthase complex involved in the purines biosynthetic pathway. Catalyzes the ATP-dependent conversion of formylglycinamide ribonucleotide (FGAR) and glutamine to yield formylglycinamidine ribonucleotide (FGAM) and glutamate. The FGAM synthase complex is composed of three subunits. PurQ produces an ammonia molecule by converting glutamine to glutamate. PurL transfers the ammonia molecule to FGAR to form FGAM in an ATP-dependent manner. PurS interacts with PurQ and PurL and is thought to assist in the transfer of the ammonia molecule from PurQ to PurL. The protein is Phosphoribosylformylglycinamidine synthase subunit PurQ of Rubrobacter xylanophilus (strain DSM 9941 / JCM 11954 / NBRC 16129 / PRD-1).